Here is a 332-residue protein sequence, read N- to C-terminus: tRNA N6-adenosine threonylcarbamoyltransferase (332 aa).

Fe cation contacts are provided by His-107 and His-111. Residues 129-133, Asp-162, Gly-175, and Asn-267 each bind substrate; that span reads LVSGG. Asp-295 provides a ligand contact to Fe cation.

This sequence belongs to the KAE1 / TsaD family. Fe(2+) is required as a cofactor.

It localises to the cytoplasm. It catalyses the reaction L-threonylcarbamoyladenylate + adenosine(37) in tRNA = N(6)-L-threonylcarbamoyladenosine(37) in tRNA + AMP + H(+). Its function is as follows. Required for the formation of a threonylcarbamoyl group on adenosine at position 37 (t(6)A37) in tRNAs that read codons beginning with adenine. Is involved in the transfer of the threonylcarbamoyl moiety of threonylcarbamoyl-AMP (TC-AMP) to the N6 group of A37, together with TsaE and TsaB. TsaD likely plays a direct catalytic role in this reaction. The protein is tRNA N6-adenosine threonylcarbamoyltransferase of Campylobacter hominis (strain ATCC BAA-381 / DSM 21671 / CCUG 45161 / LMG 19568 / NCTC 13146 / CH001A).